Consider the following 134-residue polypeptide: Large ribosomal subunit protein bL20 (134 aa).

The protein belongs to the bacterial ribosomal protein bL20 family.

Binds directly to 23S ribosomal RNA and is necessary for the in vitro assembly process of the 50S ribosomal subunit. It is not involved in the protein synthesizing functions of that subunit. This is Large ribosomal subunit protein bL20 from Sinorhizobium fredii (strain NBRC 101917 / NGR234).